We begin with the raw amino-acid sequence, 228 residues long: UPF0173 metal-dependent hydrolase RBAM_026340 (228 aa).

It belongs to the UPF0173 family.

In Bacillus velezensis (strain DSM 23117 / BGSC 10A6 / LMG 26770 / FZB42) (Bacillus amyloliquefaciens subsp. plantarum), this protein is UPF0173 metal-dependent hydrolase RBAM_026340.